A 692-amino-acid polypeptide reads, in one-letter code: MHDELEKAGRHLLMVNDHLSEDSVEQGDICMTQVPTMFSDDEDQDEEQETEIPPEEGDDDILISTQVQGAIDELNHQETVVHTFRNVLSRFALETQDQADIPLVSSKKVPVKKVIKSSKVKQPTARLQKRIKSITQFNTDNWESNRVKDRAQKMISILSGKSAKVKKLVSKLDSEASADAESLQDSHPTQFAPFNESEWQHIVGLLREKLPKVSRSELNSVQQYVYGADEQHNLWKASQLSPEKQISSQCSDGESETILPSLTLDNNAPVYTLSQLVEGESSNNRCSTEDGLRFKPISNPSSVIEQELPISIDVPSSETDVPSQIADSCDSGSIISFEELSFMIQDKNKADVDYDIPCYLPPDSKTLPTGEKTKREYSRANINDQLINISQTSYDVVSSIVSPMKAQRTGTIQVPATRTTTFQDQQQQNQQQASKPANVVKIYVDSNRDSNDVFASVKGEVDTQEQESLSTLTTSMLHDDNNEIVIDSEDERGSYSIMEVHDAPQTHLGQFPSLRKSQSQKLKTPVSATDSLDSQLQPALLTTQNASPNTAKLRRSFKVIGLKPCKNKVQMLQVWETLESKFPGSSDEDRSIQLKQFLTDLIVQNRDESALLMEQIYTFEPIRYEQLKEWLVSLNSFTELIDDSFIKNWADLNGIVFRNDTENPLLSQSQSQSQSRLLSQSLSQLQSPSLSP.

Positions Ser-39–Asp-59 are disordered.

Belongs to the SLX4 family. In terms of assembly, forms a heterodimer with SLX1. In terms of processing, phosphorylated in response to DNA damage.

It is found in the nucleus. In terms of biological role, regulatory subunit of the SLX1-SLX4 structure-specific endonuclease that resolves DNA secondary structures generated during DNA repair and recombination. Has endonuclease activity towards branched DNA substrates, introducing single-strand cuts in duplex DNA close to junctions with ss-DNA. The protein is Structure-specific endonuclease subunit SLX4 of Kluyveromyces lactis (strain ATCC 8585 / CBS 2359 / DSM 70799 / NBRC 1267 / NRRL Y-1140 / WM37) (Yeast).